The chain runs to 139 residues: Ribonuclease P protein component (139 aa).

The segment at 120 to 139 is disordered; the sequence is KATTGGECTPKSEKCVTAPR.

The protein belongs to the RnpA family. As to quaternary structure, consists of a catalytic RNA component (M1 or rnpB) and a protein subunit.

It carries out the reaction Endonucleolytic cleavage of RNA, removing 5'-extranucleotides from tRNA precursor.. In terms of biological role, RNaseP catalyzes the removal of the 5'-leader sequence from pre-tRNA to produce the mature 5'-terminus. It can also cleave other RNA substrates such as 4.5S RNA. The protein component plays an auxiliary but essential role in vivo by binding to the 5'-leader sequence and broadening the substrate specificity of the ribozyme. In Chlamydia pneumoniae (Chlamydophila pneumoniae), this protein is Ribonuclease P protein component.